A 938-amino-acid polypeptide reads, in one-letter code: Protocadherin gamma-C4 (938 aa).

An N-terminal signal peptide occupies residues 1–29; it reads MLRKVRSWTEIWRWATLLFLFYHLGYVCG. Cadherin domains follow at residues 30–133, 134–242, 243–350, 351–455, 456–565, and 572–676; these read QIRY…APRF, PRQQ…APAF, QQSS…APYI, TVTS…PPSF, FQRS…APAV, and PGSL…VPDL. The Extracellular portion of the chain corresponds to 30-692; that stretch reads QIRYPVPEES…REGESRLTLY (663 aa). 3 N-linked (GlcNAc...) asparagine glycosylation sites follow: N265, N276, and N444. Residues 693-713 traverse the membrane as a helical segment; that stretch reads LAVSLVAICFVSFGSFVALLS. Over 714-938 the chain is Cytoplasmic; it reads KCLRGAACGV…KKKSGKKEKK (225 aa). Disordered regions lie at residues 791 to 847 and 908 to 938; these read PSAP…WPNN and ATLT…KEKK. Residues 822–847 are compositionally biased toward polar residues; sequence WRFSQAQRPGTSGSQNGDDTGTWPNN. A compositionally biased stretch (basic residues) spans 928–938; it reads NKKKSGKKEKK.

It is found in the cell membrane. In terms of biological role, potential calcium-dependent cell-adhesion protein. May be involved in the establishment and maintenance of specific neuronal connections in the brain. In Homo sapiens (Human), this protein is Protocadherin gamma-C4 (PCDHGC4).